A 5405-amino-acid polypeptide reads, in one-letter code: IgGFc-binding protein (5405 aa).

Residues 1–23 (MGALWSWWILWAGATLLWGLTQE) form the signal peptide. The segment at 24–450 (ASVDLKNTGR…EPSCEGMQCA (427 aa)) is igGFc-binding. N-linked (GlcNAc...) asparagine glycans are attached at residues asparagine 75 and asparagine 91. Residues 470–650 (AVCRAQGDPH…KLDDGDYLCE (181 aa)) enclose the VWFD 1 domain. Intrachain disulfides connect cysteine 472/cysteine 611 and cysteine 494/cysteine 649. Positions 745-799 (CPANSRYELCGPACPTSCNGAAAPSNCSGRPCVEGCVCLPGFVASGGACVPASSC) constitute a TIL 1 domain. One can recognise a VWFD 2 domain in the interval 862-1041 (GTCQGSGDPH…WQEETRPGCG (180 aa)). Intrachain disulfides connect cysteine 864–cysteine 1003 and cysteine 886–cysteine 1040. The TIL 2 domain maps to 1136–1189 (CPPHSHYEACSYGCPLSCGDLPVPGGCGSECHEGCVCDEGFALSGESCLPLASC). One can recognise a VWFD 3 domain in the interval 1250–1429 (STCQASGDPH…EEVVPDSPCL (180 aa)). 2 disulfide bridges follow: cysteine 1252–cysteine 1390 and cysteine 1274–cysteine 1428. Residue asparagine 1317 is glycosylated (N-linked (GlcNAc...) (complex) asparagine). The region spanning 1532-1585 (CPPNSHYELCADTCSLGCSALSAPPQCQDGCAEGCQCDSGFLYNGQACVPIQQC) is the TIL 3 domain. The VWFD 4 domain maps to 1671–1854 (ATCWLWGDPH…RAPGWDPLCW (184 aa)). 3 disulfide bridges follow: cysteine 1673–cysteine 1815, cysteine 1695–cysteine 1853, and cysteine 1704–cysteine 1812. Residue asparagine 1743 is glycosylated (N-linked (GlcNAc...) asparagine). One can recognise a TIL 4 domain in the interval 1950-2007 (CPENSHYEVCGSPCPASCPSPAPLTTPAVCEGPCVEGCQCDAGFVLSADRCVPLNNGC). One can recognise a VWFD 5 domain in the interval 2070–2253 (AECQAWGDPH…VSKPCPSPCT (184 aa)). 2 disulfides stabilise this stretch: cysteine 2072/cysteine 2211 and cysteine 2094/cysteine 2252. Asparagine 2138 carries an N-linked (GlcNAc...) asparagine glycan. The region spanning 2337 to 2390 (CPAHSHYELCGDSCPGSCPSLSAPEGCESACREGCVCDAGFVLSGDTCVPVGQC) is the TIL 5 domain. The VWFD 6 domain occupies 2451–2630 (TTCQASGDPH…EEVVPDSPCL (180 aa)). Intrachain disulfides connect cysteine 2453–cysteine 2591 and cysteine 2475–cysteine 2629. Residue asparagine 2518 is glycosylated (N-linked (GlcNAc...) asparagine). The TIL 6 domain maps to 2733–2786 (CPQNSHYELCADTCSLGCSALSAPLQCPDGCAEGCQCDSGFLYNGQACVPIQQC). The region spanning 2872 to 3055 (ATCWLWGDPH…RAPGWDPLCW (184 aa)) is the VWFD 7 domain. 3 disulfides stabilise this stretch: cysteine 2874–cysteine 3016, cysteine 2896–cysteine 3054, and cysteine 2905–cysteine 3013. The TIL 7 domain maps to 3151 to 3208 (CPENSHYEVCGPPCPASCPSPAPLTTPAVCEGPCVEGCQCDAGFVLSADRCVPLNNGC). The VWFD 8 domain maps to 3271–3454 (AECQAWGDPH…VSKPCPSPCT (184 aa)). Cystine bridges form between cysteine 3273-cysteine 3412 and cysteine 3295-cysteine 3453. The TIL 8 domain occupies 3538-3591 (CPAHSHYELCGDSCPGSCPSLSAPEGCESACREGCVCDAGFVLSGDTCVPVGQC). The VWFD 9 domain maps to 3652–3831 (TTCQASGDPH…EEVVPDSPCL (180 aa)). Intrachain disulfides connect cysteine 3654–cysteine 3792 and cysteine 3676–cysteine 3830. An N-linked (GlcNAc...) asparagine glycan is attached at asparagine 3719. A TIL 9 domain is found at 3934 to 3987 (CPQNSHYELCADTCSLGCSALSAPLQCPDGCAEGCQCDSGFLYNGQACVPIQQC). Residues 4073-4256 (ATCWLWGDPH…RAPGWDPLCW (184 aa)) enclose the VWFD 10 domain. 3 disulfides stabilise this stretch: cysteine 4075–cysteine 4217, cysteine 4097–cysteine 4255, and cysteine 4106–cysteine 4214. An N-linked (GlcNAc...) asparagine glycan is attached at asparagine 4145. The region spanning 4352–4409 (CPENSHYEVCGPPCPASCPSPAPLTTPAVCEGPCVEGCQCDAGFVLSADRCVPLNNGC) is the TIL 10 domain. The VWFD 11 domain occupies 4472-4655 (AECQAWGDPH…VSKPCPSPCT (184 aa)). 2 disulfide bridges follow: cysteine 4474/cysteine 4613 and cysteine 4496/cysteine 4654. Residue asparagine 4540 is glycosylated (N-linked (GlcNAc...) asparagine). A TIL 11 domain is found at 4739-4792 (CPAHSHYELCGDSCPVSCPSLSAPEGCESACREGCVCDAGFVLSGDTCVPVGQC). Residues 4854 to 5025 (GRCLANGGIH…RAPGSSKGCG (172 aa)) enclose the VWFD 12 domain. Disulfide bonds link cysteine 4856/cysteine 4986 and cysteine 4878/cysteine 5024. One can recognise a TIL 12 domain in the interval 5121–5174 (CPAHSHYSICTRTCQGSCAALSGLTGCTTRCFEGCECDDRFLLSQGVCIPVQDC). The VWFD 13 domain occupies 5233-5404 (GLCVLSVGAN…WRAQDFSPCY (172 aa)). A disulfide bridge links cysteine 5235 with cysteine 5372.

In terms of assembly, interacts with the Fc portion of IgG and with MUC2. As to expression, mainly expressed in placenta and colon epithelium. Expressed in thyroid, and down-regulated in thyroid carcinomas. Present in serum, with higher levels in patients with various autoimmune diseases (at protein level).

The protein localises to the secreted. In terms of biological role, may be involved in the maintenance of the mucosal structure as a gel-like component of the mucosa. The protein is IgGFc-binding protein (FCGBP) of Homo sapiens (Human).